Reading from the N-terminus, the 105-residue chain is Insulin (105 aa).

An N-terminal signal peptide occupies residues 1–22 (MAFWLQAASLLVLLALSPGVDA). 3 cysteine pairs are disulfide-bonded: Cys29-Cys91, Cys41-Cys104, and Cys90-Cys95. Positions 53 to 82 (DVDPLIGFLSPKSAKENEEYPFKDQTEMMV) are cleaved as a propeptide — c peptide.

It belongs to the insulin family. In terms of assembly, heterodimer of a B chain and an A chain linked by two disulfide bonds.

The protein resides in the secreted. Functionally, insulin decreases blood glucose concentration. It increases cell permeability to monosaccharides, amino acids and fatty acids. It accelerates glycolysis, the pentose phosphate cycle, and glycogen synthesis in liver. The polypeptide is Insulin (ins) (Oncorhynchus keta (Chum salmon)).